Reading from the N-terminus, the 336-residue chain is Galactose/methyl galactoside import permease protein MglC (336 aa).

9 helical membrane passes run 17-37 (GIYV…PTFL), 53-73 (IIIA…LSAG), 107-127 (LVIL…GIII), 128-148 (AYLN…VYGI), 181-201 (FRLS…WVLW), 227-247 (VALN…FGGL), 257-277 (TNNL…VGGV), 279-299 (FSGG…FTVI), and 306-326 (IGVN…FAVA).

Belongs to the binding-protein-dependent transport system permease family. AraH/RbsC subfamily. The complex is composed of one ATP-binding protein (MglA), two transmembrane proteins (MglC) and a solute-binding protein (MglB).

It is found in the cell inner membrane. In terms of biological role, part of the ABC transporter complex MglABC involved in galactose/methyl galactoside import. Probably responsible for the translocation of the substrate across the membrane. In Salmonella typhimurium (strain LT2 / SGSC1412 / ATCC 700720), this protein is Galactose/methyl galactoside import permease protein MglC (mglC).